The following is a 67-amino-acid chain: Large ribosomal subunit protein uL29 (67 aa).

Belongs to the universal ribosomal protein uL29 family.

The sequence is that of Large ribosomal subunit protein uL29 from Polaromonas naphthalenivorans (strain CJ2).